The following is a 132-amino-acid chain: Small ribosomal subunit protein uS8c (132 aa).

Belongs to the universal ribosomal protein uS8 family. As to quaternary structure, part of the 30S ribosomal subunit.

The protein resides in the plastid. It is found in the chloroplast. Functionally, one of the primary rRNA binding proteins, it binds directly to 16S rRNA central domain where it helps coordinate assembly of the platform of the 30S subunit. This chain is Small ribosomal subunit protein uS8c (rps8), found in Illicium oligandrum (Star anise).